Reading from the N-terminus, the 551-residue chain is Glucose-6-phosphate isomerase (551 aa).

The active-site Proton donor is the E349. Catalysis depends on residues H378 and K480.

This sequence belongs to the GPI family.

The protein localises to the cytoplasm. The enzyme catalyses alpha-D-glucose 6-phosphate = beta-D-fructose 6-phosphate. It participates in carbohydrate biosynthesis; gluconeogenesis. Its pathway is carbohydrate degradation; glycolysis; D-glyceraldehyde 3-phosphate and glycerone phosphate from D-glucose: step 2/4. In terms of biological role, catalyzes the reversible isomerization of glucose-6-phosphate to fructose-6-phosphate. The chain is Glucose-6-phosphate isomerase from Prochlorococcus marinus (strain MIT 9313).